We begin with the raw amino-acid sequence, 475 residues long: ATP synthase subunit beta 1 (475 aa).

153-160 (GGAGVGKT) serves as a coordination point for ATP.

It belongs to the ATPase alpha/beta chains family. In terms of assembly, F-type ATPases have 2 components, CF(1) - the catalytic core - and CF(0) - the membrane proton channel. CF(1) has five subunits: alpha(3), beta(3), gamma(1), delta(1), epsilon(1). CF(0) has three main subunits: a(1), b(2) and c(9-12). The alpha and beta chains form an alternating ring which encloses part of the gamma chain. CF(1) is attached to CF(0) by a central stalk formed by the gamma and epsilon chains, while a peripheral stalk is formed by the delta and b chains.

Its subcellular location is the cell membrane. The enzyme catalyses ATP + H2O + 4 H(+)(in) = ADP + phosphate + 5 H(+)(out). Its function is as follows. Produces ATP from ADP in the presence of a proton gradient across the membrane. The catalytic sites are hosted primarily by the beta subunits. The polypeptide is ATP synthase subunit beta 1 (Mycoplasmopsis pulmonis (strain UAB CTIP) (Mycoplasma pulmonis)).